Consider the following 260-residue polypeptide: Ribosomal RNA small subunit methyltransferase G (260 aa).

S-adenosyl-L-methionine-binding residues include Gly-111, Phe-116, and Arg-181.

Belongs to the methyltransferase superfamily. RNA methyltransferase RsmG family.

The protein resides in the cytoplasm. The catalysed reaction is guanosine(527) in 16S rRNA + S-adenosyl-L-methionine = N(7)-methylguanosine(527) in 16S rRNA + S-adenosyl-L-homocysteine. Specifically methylates the N7 position of guanine in position 527 of 16S rRNA. This Nitrobacter hamburgensis (strain DSM 10229 / NCIMB 13809 / X14) protein is Ribosomal RNA small subunit methyltransferase G.